Here is a 52-residue protein sequence, read N- to C-terminus: ATP synthase protein 8 (52 aa).

A helical membrane pass occupies residues 10-30; it reads FLMSLMIMMILIFMTINFYFF.

It belongs to the ATPase protein 8 family. In terms of assembly, F-type ATPases have 2 components, CF(1) - the catalytic core - and CF(0) - the membrane proton channel.

It localises to the mitochondrion membrane. Its function is as follows. Mitochondrial membrane ATP synthase (F(1)F(0) ATP synthase or Complex V) produces ATP from ADP in the presence of a proton gradient across the membrane which is generated by electron transport complexes of the respiratory chain. F-type ATPases consist of two structural domains, F(1) - containing the extramembraneous catalytic core and F(0) - containing the membrane proton channel, linked together by a central stalk and a peripheral stalk. During catalysis, ATP synthesis in the catalytic domain of F(1) is coupled via a rotary mechanism of the central stalk subunits to proton translocation. Part of the complex F(0) domain. Minor subunit located with subunit a in the membrane. In Rhipicephalus sanguineus (Brown dog tick), this protein is ATP synthase protein 8 (MT-ATP8).